A 156-amino-acid chain; its full sequence is Small ribosomal subunit protein uS7 (156 aa).

Belongs to the universal ribosomal protein uS7 family. In terms of assembly, part of the 30S ribosomal subunit. Contacts proteins S9 and S11.

Its function is as follows. One of the primary rRNA binding proteins, it binds directly to 16S rRNA where it nucleates assembly of the head domain of the 30S subunit. Is located at the subunit interface close to the decoding center, probably blocks exit of the E-site tRNA. The sequence is that of Small ribosomal subunit protein uS7 from Nitratiruptor sp. (strain SB155-2).